We begin with the raw amino-acid sequence, 166 residues long: Large ribosomal subunit protein bL9 (166 aa).

Belongs to the bacterial ribosomal protein bL9 family.

Binds to the 23S rRNA. In Brachyspira hyodysenteriae (strain ATCC 49526 / WA1), this protein is Large ribosomal subunit protein bL9.